The primary structure comprises 244 residues: LexA repressor (244 aa).

Residues 1 to 24 (MSDSSDTTVDGASDGASDGASGAD) are disordered. The segment covering 10-24 (DGASDGASDGASGAD) has biased composition (low complexity). A DNA-binding region (H-T-H motif) is located at residues 58–78 (IREIGDAVGLTSTSSVAHQLR). Residues Ser168 and Lys205 each act as for autocatalytic cleavage activity in the active site.

Belongs to the peptidase S24 family. As to quaternary structure, homodimer.

It catalyses the reaction Hydrolysis of Ala-|-Gly bond in repressor LexA.. Represses a number of genes involved in the response to DNA damage (SOS response), including recA and lexA. In the presence of single-stranded DNA, RecA interacts with LexA causing an autocatalytic cleavage which disrupts the DNA-binding part of LexA, leading to derepression of the SOS regulon and eventually DNA repair. The polypeptide is LexA repressor (Mycobacterium ulcerans (strain Agy99)).